Reading from the N-terminus, the 1019-residue chain is Insulin-degrading enzyme (1019 aa).

Residue His-108 participates in Zn(2+) binding. The active-site Proton acceptor is the Glu-111. Positions 112 and 189 each coordinate Zn(2+). Lys-192 carries the N6-succinyllysine modification. Substrate is bound at residue 359–363; the sequence is LVGGQ. Residue Arg-429 coordinates ATP. N6-succinyllysine is present on Lys-697. The short motif at 853-858 is the SlyX motif element; sequence EKPPHY. 895-901 is an ATP binding site; that stretch reads DKPKKLS.

It belongs to the peptidase M16 family. In terms of assembly, homodimer. Can also form homotetramers. Zn(2+) is required as a cofactor. As to expression, detected in brain and liver (at protein level). Detected in liver.

Its subcellular location is the cytoplasm. It localises to the cytosol. The protein localises to the cell membrane. The protein resides in the secreted. The catalysed reaction is Degradation of insulin, glucagon and other polypeptides. No action on proteins.. With respect to regulation, activated by ATP, other nucleotide triphosphates and small peptides. Inhibited by bacitracin. Its function is as follows. Plays a role in the cellular breakdown of insulin, APP peptides, IAPP peptides, natriuretic peptides, glucagon, bradykinin, kallidin, and other peptides, and thereby plays a role in intercellular peptide signaling. Substrate binding induces important conformation changes, making it possible to bind and degrade larger substrates, such as insulin. Contributes to the regulation of peptide hormone signaling cascades and regulation of blood glucose homeostasis via its role in the degradation of insulin, glucagon and IAPP. Plays a role in the degradation and clearance of APP-derived amyloidogenic peptides that are secreted by neurons and microglia. Degrades the natriuretic peptides ANP, BNP and CNP, inactivating their ability to raise intracellular cGMP. Also degrades an aberrant frameshifted 40-residue form of NPPA (fsNPPA) which is associated with familial atrial fibrillation in heterozygous patients. Involved in antigen processing. Produces both the N terminus and the C terminus of MAGEA3-derived antigenic peptide (EVDPIGHLY) that is presented to cytotoxic T lymphocytes by MHC class I. This Mus musculus (Mouse) protein is Insulin-degrading enzyme (Ide).